A 162-amino-acid polypeptide reads, in one-letter code: uncharacterized protein (162 aa).

The 73-residue stretch at 6 to 78 folds into the HTH asnC-type domain; sequence LDDLDRNILR…ALIVLEVGKP (73 aa). Positions 25-44 form a DNA-binding region, H-T-H motif; it reads ISELSEQLKKPESTIHFRIK.

This is an uncharacterized protein from Pyrococcus furiosus (strain ATCC 43587 / DSM 3638 / JCM 8422 / Vc1).